A 151-amino-acid polypeptide reads, in one-letter code: uncharacterized protein (151 aa).

BON domains are found at residues 2–68 (DDAA…AVDK) and 78–146 (IDSA…RLKH).

This is an uncharacterized protein from Anaplasma centrale.